Consider the following 308-residue polypeptide: Olfactory receptor 5H8 (308 aa).

The Extracellular segment spans residues 1 to 28 (MDDENATLLTEFVLTGLTYQSEWKIPLF). The chain crosses the membrane as a helical span at residues 29–49 (LAFLVIYLITIMANLGLIAVI). Over 50–56 (WKDSHLH) the chain is Cytoplasmic. Residues 57 to 77 (IPMYLFLGSLAFVDAWLSSSV) form a helical membrane-spanning segment. The Extracellular portion of the chain corresponds to 78–98 (TPKMLISFLAKSMIISVSECK). An intrachain disulfide couples C97 to C179. The helical transmembrane segment at 99–119 (IQFFSFGISGTTECFLLATMA) threads the bilayer. Topologically, residues 120–133 (YDRYVAICKPLLYP) are cytoplasmic. Residues 134 to 154 (VIMTNGLCIWLLVLSFIGGFL) traverse the membrane as a helical segment. At 155–195 (HALIHEGILFRLTFCNSNIIHHFYCDIIPLLKISCTDPSIN) the chain is on the extracellular side. Residues 196 to 216 (FLMLFILSGSIQVFTILTVLV) traverse the membrane as a helical segment. The Cytoplasmic portion of the chain corresponds to 217 to 238 (SYTFVLFTILKKKAKDIRKAFS). A helical transmembrane segment spans residues 239–259 (TCGAHLLSVSLYYGPLLFMYV). Residues 260–270 (HPASPQADDQD) lie on the Extracellular side of the membrane. Residues 271 to 291 (MVESLFYTVIIPFLNPIIYSL) form a helical membrane-spanning segment. The Cytoplasmic portion of the chain corresponds to 292–308 (RNKQVIDSLTKTLKGNV).

It belongs to the G-protein coupled receptor 1 family.

Its subcellular location is the cell membrane. Its function is as follows. Odorant receptor. The chain is Olfactory receptor 5H8 from Homo sapiens (Human).